Here is a 445-residue protein sequence, read N- to C-terminus: Argininosuccinate synthase (445 aa).

Residues 17–25 and Ala43 each bind ATP; that span reads AFSGGLDTS. L-citrulline is bound at residue Tyr99. Positions 129 and 131 each coordinate ATP. L-aspartate-binding residues include Thr131, Asn135, and Asp136. Position 135 (Asn135) interacts with L-citrulline. Residue Asp136 coordinates ATP. Arg139 and Ser192 together coordinate L-citrulline. ATP is bound at residue Asp194. L-citrulline contacts are provided by Thr201, Glu203, and Glu280.

Belongs to the argininosuccinate synthase family. Type 2 subfamily. In terms of assembly, homotetramer.

The protein resides in the cytoplasm. It carries out the reaction L-citrulline + L-aspartate + ATP = 2-(N(omega)-L-arginino)succinate + AMP + diphosphate + H(+). Its pathway is amino-acid biosynthesis; L-arginine biosynthesis; L-arginine from L-ornithine and carbamoyl phosphate: step 2/3. This chain is Argininosuccinate synthase, found in Rhodopseudomonas palustris (strain BisA53).